Here is a 572-residue protein sequence, read N- to C-terminus: Proline--tRNA ligase (572 aa).

The protein belongs to the class-II aminoacyl-tRNA synthetase family. ProS type 1 subfamily. In terms of assembly, homodimer.

Its subcellular location is the cytoplasm. The catalysed reaction is tRNA(Pro) + L-proline + ATP = L-prolyl-tRNA(Pro) + AMP + diphosphate. In terms of biological role, catalyzes the attachment of proline to tRNA(Pro) in a two-step reaction: proline is first activated by ATP to form Pro-AMP and then transferred to the acceptor end of tRNA(Pro). As ProRS can inadvertently accommodate and process non-cognate amino acids such as alanine and cysteine, to avoid such errors it has two additional distinct editing activities against alanine. One activity is designated as 'pretransfer' editing and involves the tRNA(Pro)-independent hydrolysis of activated Ala-AMP. The other activity is designated 'posttransfer' editing and involves deacylation of mischarged Ala-tRNA(Pro). The misacylated Cys-tRNA(Pro) is not edited by ProRS. The sequence is that of Proline--tRNA ligase from Escherichia coli O9:H4 (strain HS).